The following is a 152-amino-acid chain: MFRGATLVNLDSKGRLAVPTRYREGLIENAAGQLVCTIDIHHPCLLLYPLPEWEVIEQKLSRLSSMNPVERRVQRLLLGHASECQMDNAGRLLIAPVLRQHAGLTKEVMLVGQFNKFELWDETTWYQRVKEDIDAEQSATGELSERLQDLSL.

SpoVT-AbrB domains lie at 5–52 (ATLV…PLPE) and 81–124 (ASEC…DETT).

It belongs to the MraZ family. As to quaternary structure, forms oligomers.

It is found in the cytoplasm. It localises to the nucleoid. Negatively regulates its own expression and that of the subsequent genes in the proximal part of the division and cell wall (dcw) gene cluster. Acts by binding directly to DNA. May also regulate the expression of genes outside the dcw cluster. The chain is Transcriptional regulator MraZ from Klebsiella pneumoniae subsp. pneumoniae (strain ATCC 700721 / MGH 78578).